The following is a 166-amino-acid chain: PTS system glucose-specific EIIA component (166 aa).

A PTS EIIA type-1 domain is found at 34–138 (DPVFAQKMMG…SVISPIIITN (105 aa)). Zn(2+) contacts are provided by histidine 71 and histidine 86. Histidine 86 acts as the Tele-phosphohistidine intermediate; for EIIA activity in catalysis. Residue histidine 86 is modified to Phosphohistidine; by HPr.

In terms of assembly, heterodimer with glycerol kinase (glpk). Zn(2+) serves as cofactor.

The protein resides in the cytoplasm. Functionally, the phosphoenolpyruvate-dependent sugar phosphotransferase system (sugar PTS), a major carbohydrate active transport system, catalyzes the phosphorylation of incoming sugar substrates concomitantly with their translocation across the cell membrane. The enzyme II complex composed of PtsG and Crr is involved in glucose transport. In Staphylococcus aureus (strain COL), this protein is PTS system glucose-specific EIIA component (crr).